We begin with the raw amino-acid sequence, 592 residues long: 2-succinyl-5-enolpyruvyl-6-hydroxy-3-cyclohexene-1-carboxylate synthase (592 aa).

This sequence belongs to the TPP enzyme family. MenD subfamily. Homodimer. It depends on Mg(2+) as a cofactor. The cofactor is Mn(2+). Thiamine diphosphate is required as a cofactor.

It carries out the reaction isochorismate + 2-oxoglutarate + H(+) = 5-enolpyruvoyl-6-hydroxy-2-succinyl-cyclohex-3-ene-1-carboxylate + CO2. Its pathway is quinol/quinone metabolism; 1,4-dihydroxy-2-naphthoate biosynthesis; 1,4-dihydroxy-2-naphthoate from chorismate: step 2/7. It functions in the pathway quinol/quinone metabolism; menaquinone biosynthesis. Catalyzes the thiamine diphosphate-dependent decarboxylation of 2-oxoglutarate and the subsequent addition of the resulting succinic semialdehyde-thiamine pyrophosphate anion to isochorismate to yield 2-succinyl-5-enolpyruvyl-6-hydroxy-3-cyclohexene-1-carboxylate (SEPHCHC). In Haloarcula marismortui (strain ATCC 43049 / DSM 3752 / JCM 8966 / VKM B-1809) (Halobacterium marismortui), this protein is 2-succinyl-5-enolpyruvyl-6-hydroxy-3-cyclohexene-1-carboxylate synthase.